The following is a 170-amino-acid chain: uncharacterized protein (170 aa).

Residues 7–27 form a helical membrane-spanning segment; that stretch reads LVELLIGLAIISIALNFAVPL.

The protein resides in the membrane. This is an uncharacterized protein from Haemophilus influenzae (strain ATCC 51907 / DSM 11121 / KW20 / Rd).